A 256-amino-acid polypeptide reads, in one-letter code: Thiazole synthase (256 aa).

The active-site Schiff-base intermediate with DXP is lysine 102. 1-deoxy-D-xylulose 5-phosphate-binding positions include glycine 163, 189–190 (AG), and 211–212 (AT).

It belongs to the ThiG family. Homotetramer. Forms heterodimers with either ThiH or ThiS.

The protein localises to the cytoplasm. It carries out the reaction [ThiS sulfur-carrier protein]-C-terminal-Gly-aminoethanethioate + 2-iminoacetate + 1-deoxy-D-xylulose 5-phosphate = [ThiS sulfur-carrier protein]-C-terminal Gly-Gly + 2-[(2R,5Z)-2-carboxy-4-methylthiazol-5(2H)-ylidene]ethyl phosphate + 2 H2O + H(+). It participates in cofactor biosynthesis; thiamine diphosphate biosynthesis. In terms of biological role, catalyzes the rearrangement of 1-deoxy-D-xylulose 5-phosphate (DXP) to produce the thiazole phosphate moiety of thiamine. Sulfur is provided by the thiocarboxylate moiety of the carrier protein ThiS. In vitro, sulfur can be provided by H(2)S. This chain is Thiazole synthase, found in Nocardia farcinica (strain IFM 10152).